Here is a 100-residue protein sequence, read N- to C-terminus: Aspartyl/glutamyl-tRNA(Asn/Gln) amidotransferase subunit C (100 aa).

This sequence belongs to the GatC family. In terms of assembly, heterotrimer of A, B and C subunits.

It carries out the reaction L-glutamyl-tRNA(Gln) + L-glutamine + ATP + H2O = L-glutaminyl-tRNA(Gln) + L-glutamate + ADP + phosphate + H(+). It catalyses the reaction L-aspartyl-tRNA(Asn) + L-glutamine + ATP + H2O = L-asparaginyl-tRNA(Asn) + L-glutamate + ADP + phosphate + 2 H(+). Functionally, allows the formation of correctly charged Asn-tRNA(Asn) or Gln-tRNA(Gln) through the transamidation of misacylated Asp-tRNA(Asn) or Glu-tRNA(Gln) in organisms which lack either or both of asparaginyl-tRNA or glutaminyl-tRNA synthetases. The reaction takes place in the presence of glutamine and ATP through an activated phospho-Asp-tRNA(Asn) or phospho-Glu-tRNA(Gln). The sequence is that of Aspartyl/glutamyl-tRNA(Asn/Gln) amidotransferase subunit C from Janthinobacterium sp. (strain Marseille) (Minibacterium massiliensis).